We begin with the raw amino-acid sequence, 2220 residues long: Non-reducing polyketide synthase stbA (2220 aa).

An N-terminal acylcarrier protein transacylase domain (SAT) region spans residues 10 to 255 (IFSPQNSPPK…HDATNTDMAQ (246 aa)). One can recognise a Ketosynthase family 3 (KS3) domain in the interval 379-803 (SDAIAVVGAG…GSNSALICSE (425 aa)). Catalysis depends on for beta-ketoacyl synthase activity residues Cys551, His687, and His726. The interval 906-1207 (LAFSGQSRTN…ADATQHTFQA (302 aa)) is malonyl-CoA:ACP transacylase (MAT) domain. The For acyl/malonyl transferase activity role is filled by Ser993. The segment at 1287 to 1414 (EPRAAQLVRY…GDFTMTAGPH (128 aa)) is N-terminal hotdog fold. The region spanning 1287 to 1589 (EPRAAQLVRY…FHKTSMTKLL (303 aa)) is the PKS/mFAS DH domain. Positions 1292-1588 (QLVRYKGALG…HFHKTSMTKL (297 aa)) are product template (PT) domain. The active-site Proton acceptor; for dehydratase activity is the His1323. Positions 1436 to 1589 (DAEKLRKRTA…FHKTSMTKLL (154 aa)) are C-terminal hotdog fold. The active-site Proton donor; for dehydratase activity is Asp1500. Carrier domains are found at residues 1634 to 1711 (AAGP…SGGA) and 1742 to 1821 (PAGP…AADV). O-(pantetheine 4'-phosphoryl)serine is present on residues Ser1671 and Ser1779. The thioesterase (TE) domain stretch occupies residues 1879 to 2210 (TRFRMETVVY…YDFIFTELEN (332 aa)). Residues Ser1999 and Asp2148 each act as for thioesterase activity in the active site.

The enzyme catalyses 3 malonyl-CoA + acetyl-CoA + 2 H(+) = orsellinate + 3 CO2 + 4 CoA. It participates in secondary metabolite biosynthesis; terpenoid biosynthesis. Non-reducing polyketide synthase; part of the cluster that mediates the biosynthesis of LL-Z1272-beta, also known as ilicicolin B, a prenylated aryl-aldehyde produced by several fungi and that serves as a key pathway intermediate for many fungal meroterpenoids. The first step in the pathway is performed by the non-reducing polyketide synthase stbA that produces orsellinic acid by condensing acetyl-CoA with 3 malonyl-CoA units. The prenyltransferase stbC then prenylates orsenilic acid into grifolic acid. Finally, grifolic acid is reduced to ilicicolin B by the NRPS-like protein stbB. The protein is Non-reducing polyketide synthase stbA of Stachybotrys bisbyi (Hyalostachybotrys bisbyi).